A 474-amino-acid polypeptide reads, in one-letter code: MSKQLPQDFVMGGATAAYQVEGATKEDGKGRVLWDDFLDKQGRFKPDPAADFYHRYDEDLALAEKYGHQVIRVSIAWSRIFPDGAGEVEPRGVAFYHKLFADCAAHHIEPFVTLHHFDTPERLHEAGDWLSQEMLDDFVAYAKFCFEEFSEVKYWITINEPTSMAVQQYTSGTFPPAESGRFDKTFQAEHNQMVAHARIVNLYKSMQLGGQIGIVHALQTVYPYSDSAVDHHAAELQDALENRLYLDGTLAGEYHQETLALVKEILDANHQPMFQSTPQEMKAIDEAAHQLDFVGVNNYFSKWLRAYHGKSETIHNGDGTKGSSVARLQGVGEEKLPDGIETTDWDWSIYPRGMYDILMRIHNDYPLVPVTYVTENGIGLKESLPENATPDTVIEDPKRIDYVKKYLSAMADAIHDGANVKGYFIWSLQDQFSWTNGYSKRYGLFFVDFPTQNRYIKQSAEWFKSVSETHIIPD.

D-galactose 6-phosphate is bound by residues glutamine 19, histidine 116, asparagine 159, glutamate 160, and asparagine 297. The active-site Proton donor is glutamate 160. The active-site Nucleophile is glutamate 375. Residues serine 433, tryptophan 434, lysine 440, and tyrosine 442 each coordinate D-galactose 6-phosphate.

It belongs to the glycosyl hydrolase 1 family.

The enzyme catalyses a 6-phospho-beta-D-galactoside + H2O = D-galactose 6-phosphate + an alcohol. It participates in carbohydrate metabolism; lactose degradation; D-galactose 6-phosphate and beta-D-glucose from lactose 6-phosphate: step 1/1. This is 6-phospho-beta-galactosidase from Lacticaseibacillus casei (strain BL23) (Lactobacillus casei).